The chain runs to 295 residues: sn-glycerol-3-phosphate transport system permease protein UgpA (295 aa).

At 1–11 (MSSFRPVFRSR) the chain is on the cytoplasmic side. The helical transmembrane segment at 12–32 (WLPYLLVAPQLVITVIFFIWP) threads the bilayer. Over 33 to 80 (AGEALWYSLQSVDPFGFSSQFVGLENFVALFHDSYYLDAFWTTIKFSA) the chain is Periplasmic. The ABC transmembrane type-1 domain occupies 76–284 (IKFSALVTFS…FLVIILTVVQ (209 aa)). A helical transmembrane segment spans residues 81 to 101 (LVTFSGLLVSLFFAALVDYVV). Residues 102–109 (RGSRFYQT) are Cytoplasmic-facing. A helical transmembrane segment spans residues 110 to 130 (LMLLPYAVAPAVAAVLWIFLF). Topologically, residues 131 to 157 (NPGRGLITHFLGEFGYDWNHAQNSGQA) are periplasmic. Residues 158 to 178 (MFLVVFASVWKQISYNFLFFF) form a helical membrane-spanning segment. The Cytoplasmic segment spans residues 179–207 (AALQSIPRSLVEAAAIDGAGPIRRFFRLS). The chain crosses the membrane as a helical span at residues 208–228 (LPLIAPVSFFLLVVNLVYAFF). The Periplasmic segment spans residues 229-262 (DTFPVIDAATAGGPVQATTTLIYKIYREGFTGLD). A helical transmembrane segment spans residues 263–283 (LSASAAQSVVLMFLVIILTVV). The Cytoplasmic segment spans residues 284 to 295 (QFRYVESKVRYQ).

The protein belongs to the binding-protein-dependent transport system permease family. UgpAE subfamily. The complex is composed of two ATP-binding proteins (UgpC), two transmembrane proteins (UgpA and UgpE) and a solute-binding protein (UgpB).

It is found in the cell inner membrane. In terms of biological role, part of the ABC transporter complex UgpBAEC involved in sn-glycerol-3-phosphate (G3P) import. Probably responsible for the translocation of the substrate across the membrane. This chain is sn-glycerol-3-phosphate transport system permease protein UgpA (ugpA), found in Salmonella choleraesuis (strain SC-B67).